The primary structure comprises 403 residues: Sorting nexin-32 (403 aa).

A PX domain is found at 20-168; that stretch reads LQGDSSLQVE…VFLEYGQDLS (149 aa). Residues 258–335 are a coiled coil; the sequence is NQLRTSFLKL…KARTRNREVR (78 aa).

It belongs to the sorting nexin family.

May be involved in several stages of intracellular trafficking. The protein is Sorting nexin-32 (SNX32) of Homo sapiens (Human).